The following is a 476-amino-acid chain: Argininosuccinate lyase (476 aa).

The protein belongs to the lyase 1 family. Argininosuccinate lyase subfamily.

Its subcellular location is the cytoplasm. The enzyme catalyses 2-(N(omega)-L-arginino)succinate = fumarate + L-arginine. Its pathway is amino-acid biosynthesis; L-arginine biosynthesis; L-arginine from L-ornithine and carbamoyl phosphate: step 3/3. This chain is Argininosuccinate lyase, found in Gluconacetobacter diazotrophicus (strain ATCC 49037 / DSM 5601 / CCUG 37298 / CIP 103539 / LMG 7603 / PAl5).